Consider the following 101-residue polypeptide: MAKKSMVEREKKRERLVQKYAAKRAALNEIIHDQSLPMEERFKASLKLAELPRNSSATRLHNRCQLTGRPHAYYRKLKLSRIMLRELGSFGQIPGMVKSSW.

Belongs to the universal ribosomal protein uS14 family. In terms of assembly, part of the 30S ribosomal subunit. Contacts proteins S3 and S10.

Its function is as follows. Binds 16S rRNA, required for the assembly of 30S particles and may also be responsible for determining the conformation of the 16S rRNA at the A site. This is Small ribosomal subunit protein uS14 from Paracoccus denitrificans (strain Pd 1222).